The primary structure comprises 181 residues: HGPRTase-like protein 1 (181 aa).

This sequence belongs to the purine/pyrimidine phosphoribosyltransferase family. Archaeal HPRT subfamily.

Its function is as follows. May catalyze a purine salvage reaction, the substrate is unknown. The polypeptide is HGPRTase-like protein 1 (Halalkalicoccus jeotgali (strain DSM 18796 / CECT 7217 / JCM 14584 / KCTC 4019 / B3)).